Consider the following 404-residue polypeptide: Alanine racemase (404 aa).

Lys-34 (proton acceptor; specific for D-alanine) is an active-site residue. At Lys-34 the chain carries N6-(pyridoxal phosphate)lysine. Arg-133 contributes to the substrate binding site. Residues 226 to 273 (EVSSNLSYTEEFESNTAALTTTACINKCPDVSVRLTPKLPLKGSYTVR) enclose the RPE1 insert domain. The active-site Proton acceptor; specific for L-alanine is the Tyr-298. Met-346 provides a ligand contact to substrate.

The protein belongs to the alanine racemase family. It depends on pyridoxal 5'-phosphate as a cofactor.

It catalyses the reaction L-alanine = D-alanine. The protein operates within amino-acid biosynthesis; D-alanine biosynthesis; D-alanine from L-alanine: step 1/1. In terms of biological role, catalyzes the interconversion of L-alanine and D-alanine. May also act on other amino acids. This chain is Alanine racemase (alr), found in Rickettsia prowazekii (strain Madrid E).